Consider the following 651-residue polypeptide: Acetyl-coenzyme A synthetase (651 aa).

CoA is bound by residues 193 to 196 and T312; that span reads RRGK. ATP is bound by residues 388-390, 412-417, D501, and R516; these read GEP and DTWWQT. S524 serves as a coordination point for CoA. V538, H540, and V543 together coordinate Mg(2+). An N6-acetyllysine modification is found at K610.

It belongs to the ATP-dependent AMP-binding enzyme family. Requires Mg(2+) as cofactor. In terms of processing, acetylated. Deacetylation by the SIR2-homolog deacetylase activates the enzyme.

The enzyme catalyses acetate + ATP + CoA = acetyl-CoA + AMP + diphosphate. Its function is as follows. Catalyzes the conversion of acetate into acetyl-CoA (AcCoA), an essential intermediate at the junction of anabolic and catabolic pathways. AcsA undergoes a two-step reaction. In the first half reaction, AcsA combines acetate with ATP to form acetyl-adenylate (AcAMP) intermediate. In the second half reaction, it can then transfer the acetyl group from AcAMP to the sulfhydryl group of CoA, forming the product AcCoA. This is Acetyl-coenzyme A synthetase from Streptomyces coelicolor (strain ATCC BAA-471 / A3(2) / M145).